We begin with the raw amino-acid sequence, 400 residues long: Homoserine O-acetyltransferase (400 aa).

Positions 64–373 constitute an AB hydrolase-1 domain; the sequence is NAILICHALT…TDRGHDAFLL (310 aa). Serine 169 serves as the catalytic Nucleophile. Substrate is bound at residue arginine 239. Residues aspartate 335 and histidine 368 contribute to the active site. A substrate-binding site is contributed by aspartate 369.

The protein belongs to the AB hydrolase superfamily. MetX family. Homodimer.

It localises to the cytoplasm. It carries out the reaction L-homoserine + acetyl-CoA = O-acetyl-L-homoserine + CoA. It functions in the pathway amino-acid biosynthesis; L-methionine biosynthesis via de novo pathway; O-acetyl-L-homoserine from L-homoserine: step 1/1. In terms of biological role, transfers an acetyl group from acetyl-CoA to L-homoserine, forming acetyl-L-homoserine. This chain is Homoserine O-acetyltransferase, found in Bradyrhizobium diazoefficiens (strain JCM 10833 / BCRC 13528 / IAM 13628 / NBRC 14792 / USDA 110).